The chain runs to 671 residues: DNA ligase (671 aa).

Residues 38-42, 87-88, and Glu-113 contribute to the NAD(+) site; these read DKEFD and SL. Lys-115 acts as the N6-AMP-lysine intermediate in catalysis. Residues Arg-136, Glu-170, Lys-282, and Lys-306 each contribute to the NAD(+) site. 4 residues coordinate Zn(2+): Cys-396, Cys-399, Cys-414, and Cys-419. A BRCT domain is found at 586-671; the sequence is SDLQPFVGQS…LLKQEGIAID (86 aa).

The protein belongs to the NAD-dependent DNA ligase family. LigA subfamily. Mg(2+) is required as a cofactor. Requires Mn(2+) as cofactor.

The catalysed reaction is NAD(+) + (deoxyribonucleotide)n-3'-hydroxyl + 5'-phospho-(deoxyribonucleotide)m = (deoxyribonucleotide)n+m + AMP + beta-nicotinamide D-nucleotide.. Its function is as follows. DNA ligase that catalyzes the formation of phosphodiester linkages between 5'-phosphoryl and 3'-hydroxyl groups in double-stranded DNA using NAD as a coenzyme and as the energy source for the reaction. It is essential for DNA replication and repair of damaged DNA. In Leptospira biflexa serovar Patoc (strain Patoc 1 / Ames), this protein is DNA ligase.